Consider the following 412-residue polypeptide: uncharacterized protein (412 aa).

Residues 20 to 199 form the UmuC domain; the sequence is FFYFDFDAFF…LPIVELPGIG (180 aa).

The protein belongs to the DNA polymerase type-Y family.

This is an uncharacterized protein from Mycoplasma pneumoniae (strain ATCC 29342 / M129 / Subtype 1) (Mycoplasmoides pneumoniae).